A 144-amino-acid polypeptide reads, in one-letter code: Eukaryotic translation initiation factor 1A, Y-chromosomal (144 aa).

The span at 1-15 shows a compositional bias: basic residues; it reads MPKNKGKGGKNRRRG. Residues 1-26 form a disordered region; sequence MPKNKGKGGKNRRRGKNENESEKREL. Positions 16–26 are enriched in basic and acidic residues; sequence KNENESEKREL. The region spanning 22–96 is the S1-like domain; it reads EKRELVFKED…NKADVILKYN (75 aa). Lys-88 is covalently cross-linked (Glycyl lysine isopeptide (Lys-Gly) (interchain with G-Cter in ubiquitin)). The interval 114 to 144 is disordered; sequence KINETDTFGPGDDDEVQFDDIGDDDEDIDDI. Acidic residues predominate over residues 124–144; the sequence is GDDDEVQFDDIGDDDEDIDDI.

It belongs to the eIF-1A family. Component of the 43S pre-initiation complex (43S PIC), which is composed of the 40S ribosomal subunit, EIF1, eIF1A (EIF1AX), eIF3 complex, EIF5 and eIF2-GTP-initiator tRNA complex (eIF2 ternary complex). Interacts with EIF5; this interaction contributes to the maintenance of EIF1 within the open 43S PIC. Interacts through its C-terminal domain (CTD) with the CTD of EIF5B; from the location of the start codon by the 43S complex until the formation of the 80S complex. As to expression, ubiquitous.

It localises to the cytoplasm. Component of the 43S pre-initiation complex (43S PIC), which binds to the mRNA cap-proximal region, scans mRNA 5'-untranslated region, and locates the initiation codon. This protein enhances formation of the cap-proximal complex. Together with EIF1, facilitates scanning, start codon recognition, promotion of the assembly of 48S complex at the initiation codon (43S PIC becomes 48S PIC after the start codon is reached), and dissociation of aberrant complexes. After start codon location, together with EIF5B orients the initiator methionine-tRNA in a conformation that allows 60S ribosomal subunit joining to form the 80S initiation complex. Is released after 80S initiation complex formation, just after GTP hydrolysis by EIF5B, and before release of EIF5B. Its globular part is located in the A site of the 40S ribosomal subunit. Its interaction with EIF5 during scanning contribute to the maintenance of EIF1 within the open 43S PIC. In contrast to yeast orthologs, does not bind EIF1. The sequence is that of Eukaryotic translation initiation factor 1A, Y-chromosomal (EIF1AY) from Pan troglodytes (Chimpanzee).